The following is a 269-amino-acid chain: Hemin import ATP-binding protein HmuV (269 aa).

The ABC transporter domain maps to 5 to 242 (IETHSVTMRI…GLIRKVFEVC (238 aa)). An ATP-binding site is contributed by 37-44 (GPNGAGKS).

The protein belongs to the ABC transporter superfamily. Heme (hemin) importer (TC 3.A.1.14.5) family. As to quaternary structure, the complex is composed of two ATP-binding proteins (HmuV), two transmembrane proteins (HmuU) and a solute-binding protein (HmuT).

The protein localises to the cell inner membrane. In terms of biological role, part of the ABC transporter complex HmuTUV involved in hemin import. Responsible for energy coupling to the transport system. The chain is Hemin import ATP-binding protein HmuV from Nitrobacter winogradskyi (strain ATCC 25391 / DSM 10237 / CIP 104748 / NCIMB 11846 / Nb-255).